The sequence spans 229 residues: Large ribosomal subunit protein uL1 (229 aa).

It belongs to the universal ribosomal protein uL1 family. In terms of assembly, part of the 50S ribosomal subunit.

Its function is as follows. Binds directly to 23S rRNA. The L1 stalk is quite mobile in the ribosome, and is involved in E site tRNA release. Protein L1 is also a translational repressor protein, it controls the translation of the L11 operon by binding to its mRNA. This is Large ribosomal subunit protein uL1 from Streptococcus pyogenes serotype M3 (strain SSI-1).